We begin with the raw amino-acid sequence, 194 residues long: Small ribosomal subunit protein uS4c (194 aa).

A disordered region spans residues 13-36; that stretch reads GLTSKRPRSGSDPKNQLRSGKKSQ. In terms of domain architecture, S4 RNA-binding spans 82 to 143; sequence MRLDNILFRL…KQRSKALIQN (62 aa).

The protein belongs to the universal ribosomal protein uS4 family. As to quaternary structure, part of the 30S ribosomal subunit. Contacts protein S5. The interaction surface between S4 and S5 is involved in control of translational fidelity.

The protein localises to the plastid. Its subcellular location is the chloroplast. Its function is as follows. One of the primary rRNA binding proteins, it binds directly to 16S rRNA where it nucleates assembly of the body of the 30S subunit. With S5 and S12 plays an important role in translational accuracy. The chain is Small ribosomal subunit protein uS4c (rps4) from Moraea spathulata (Large yellow moraea).